A 223-amino-acid polypeptide reads, in one-letter code: DNA-directed RNA polymerase III subunit RPC7 (223 aa).

Positions 111-124 (MMPRKKCKKGDPKS) are enriched in basic and acidic residues. The disordered stretch occupies residues 111–223 (MMPRKKCKKG…SDDNMDEATY (113 aa)). At Thr134 the chain carries Phosphothreonine. Basic and acidic residues predominate over residues 144–156 (KTIEELEKRGEGE). Position 158 is a phosphoserine (Ser158). Composition is skewed to acidic residues over residues 173-198 (KDDEEDGEEDAEQEDYDEEEQEEEND) and 206-223 (NGDDFGVDSDDNMDEATY).

This sequence belongs to the eukaryotic RPC7 RNA polymerase subunit family. As to quaternary structure, component of the RNA polymerase III complex consisting of 17 subunits: a ten-subunit horseshoe-shaped catalytic core composed of POLR3A/RPC1, POLR3B/RPC2, POLR1C/RPAC1, POLR1D/RPAC2, POLR3K/RPC10, POLR2E/RPABC1, POLR2F/RPABC2, POLR2H/RPABC3, POLR2K/RPABC4 and POLR2L/RPABC5; a mobile stalk composed of two subunits POLR3H/RPC8 and CRCP/RPC9, protruding from the core and functioning primarily in transcription initiation; and additional subunits homologous to general transcription factors of the RNA polymerase II machinery, POLR3C/RPC3-POLR3F/RPC6-POLR3G/RPC7 heterotrimer required for transcription initiation and POLR3D/RPC4-POLR3E/RPC5 heterodimer involved in both transcription initiation and termination. Directly interacts with POLR3C/RPC62. Also found in a trimeric complex with POLR3C/RPC3 and POLR3GL. In terms of tissue distribution, expressed at low levels in the liver.

It localises to the nucleus. The protein resides in the cytoplasm. DNA-dependent RNA polymerase catalyzes the transcription of DNA into RNA using the four ribonucleoside triphosphates as substrates. Specific peripheric component of RNA polymerase III (Pol III) which synthesizes small non-coding RNAs including 5S rRNA, snRNAs, tRNAs and miRNAs from at least 500 distinct genomic loci. Acts as a long tether that bridges POLR3C/RPC3-POLR3F/RPC6-POLR3G/RPC7 heterotrimer and the mobile stalk of Pol III, coordinating the dynamics of Pol III stalk and clamp modules during the transition from apo to elongation state. Pol III exists as two alternative complexes defined by the mutually exclusive incorporation of subunit POLR3G/RPC7alpha or POLR3GL/RPC7beta. POLR3G/RPC7alpha modulates Pol III transcriptome by specifically enhancing the transcription of snaR-A non-coding RNAs. At resting state, occupies the active site of apo Pol III and keeps Pol III in an autoinhibitory mode, preventing non-specific transcription. Pol III plays a key role in sensing and limiting infection by intracellular bacteria and DNA viruses. Acts as a nuclear and cytosolic DNA sensor involved in innate immune response. Can sense non-self dsDNA that serves as template for transcription into dsRNA. The non-self RNA polymerase III transcripts, such as Epstein-Barr virus-encoded RNAs (EBERs), induce type I interferon and NF-kappa-B through the RIG-I pathway. The sequence is that of DNA-directed RNA polymerase III subunit RPC7 (Polr3g) from Mus musculus (Mouse).